The following is a 266-amino-acid chain: Heat-inducible transcription repressor HrcA (266 aa).

This sequence belongs to the HrcA family.

Its function is as follows. Negative regulator of class I heat shock genes (grpE-dnaK-dnaJ and groELS operons). Prevents heat-shock induction of these operons. The protein is Heat-inducible transcription repressor HrcA of Helicobacter pylori (strain ATCC 700392 / 26695) (Campylobacter pylori).